Consider the following 1398-residue polypeptide: MNKKGLTVLFIAIMLLSVVPVHFVSAGTPPVSSENSTTSILPNQQVVTKEVSQAALNAIMKGQPNMVLIIKTKEGKLEEAKTELEKLGAEILDENRVLNMLLVKIKPEKVKELNYISSLEKAWLNREVKLSPPIVEKDVKTKEPSLEPKMYNSTWVINALQFIQEFGYDGSGVVVAVLDTGVDPNHPFLSITPDGRRKIIEWKDFTDEGFVDTSFSFSKVVNGTLIINTTFQVASGLTLNESTGLMEYVVKTVYVSNVTIGNITSANGIYHFGLLPERYFDLNFDGDQEDFYPVLLVNSTGNGYDIAYVDTDLDYDFTDEVPLGQYNVTYDVAVFSYYYGPLNYVLAEIDPNGEYAVFGWDGHGHGTHVAGTVAGYDSNNDAWDWLSMYSGEWEVFSRLYGWDYTNVTTDTVQGVAPGAQIMAIRVLRSDGRGSMWDIIEGMTYAATHGADVISMSLGGNAPYLDGTDPESVAVDELTEKYGVVFVIAAGNEGPGINIVGSPGVATKAITVGAAAVPINVGVYVSQALGYPDYYGFYYFPAYTNVRIAFFSSRGPRIDGEIKPNVVAPGYGIYSSLPMWIGGADFMSGTSMATPHVSGVVALLISGAKAEGIYYNPDIIKKVLESGATWLEGDPYTGQKYTELDQGHGLVNVTKSWEILKAINGTTLPIVDHWADKSYSDFAEYLGVDVIRGLYARNSIPDIVEWHIKYVGDTEYRTFEIYATEPWIKPFVSGSVILENNTEFVLRVKYDVEGLEPGLYVGRIIIDDPTTPVIEDEILNTIVIPEKFTPENNYTLTWYDINGPEMVTHHFFTVPEGVDVLYAMTTYWDYGLYRPDGMFVFPYQLDYLPAAVSNPMPGNWELVWTGFNFAPLYESGFLVRIYGVEITPSVWYINRTYLDTNTEFSIEFNITNIYAPINATLIPIGLGTYNASVESVGDGEFFIKGIEVPEGTAELKIRIGNPSVPNSDLDLYLYDSKGNLVALDGNPTAEEEVVVEYPKPGVYSIVVHGYSVRDENGNPTTTTFDLVVQMTLDNGNIKLDKDSIILGSNESVVVTANITIDRDHPTGVYSGIIEIRDNEVYQDTNTSIAKIPITLVIDKADFAVGLTPAEGVLGEARNYTLIVKHALTLEPVPNATVIIGNYTYLTDENGTVTFTYAPTKLGSDEITVIVKKENFNTLEKTFQITVSEPEITEEDINEPKLAMSSPEANATIVSVEMESEGGVKKTVTVEITINGTANETATIVVPVPKKAENIEVSGDHVISYSIEEGEYAKYVIITVKFASPVTVTVTYTIYAGPRVSILTLNFLGYSWYRLYSQKFDELYQKALELGVDNETLALALSYHEKAKEYYEKALELSEGNIIQYLGDIRLLPPLRQAYINEMKAVKILEKAIEELEGEE.

An N-terminal signal peptide occupies residues Met1–Ala26. The propeptide occupies Gly27–Lys149. Asn152 carries an N-linked (GlcNAc...) asparagine glycan. In terms of domain architecture, Peptidase S8 spans Thr154–Trp656. The Charge relay system role is filled by Asp179. N-linked (GlcNAc...) asparagine glycans are attached at residues Asn222, Asn228, Asn240, Asn257, Asn262, Asn298, and Asn327. The active-site Charge relay system is His365. Residue Asn406 is glycosylated (N-linked (GlcNAc...) asparagine). Ser590 functions as the Charge relay system in the catalytic mechanism. Residues Asn651, Asn663, Asn739, Asn792, Asn893, Asn908, Asn917, Asn929, Asn1048, Asn1056, Asn1084, Asn1117, Asn1133, Asn1140, Asn1148, Asn1208, Asn1233, Asn1237, and Asn1332 are each glycosylated (N-linked (GlcNAc...) asparagine).

This sequence belongs to the peptidase S8 family. LWM pyrolysin seems to be produced by autoproteolytic activation of HMW pyrolysin. Post-translationally, glycosylated.

Its subcellular location is the cell envelope. Has endopeptidase activity toward caseins, casein fragments including alpha-S1-casein and synthetic peptides. The polypeptide is Pyrolysin (pls) (Pyrococcus furiosus (strain ATCC 43587 / DSM 3638 / JCM 8422 / Vc1)).